Consider the following 339-residue polypeptide: Ketol-acid reductoisomerase (NADP(+)) (339 aa).

One can recognise a KARI N-terminal Rossmann domain in the interval 1-182 (MRVYYDRDAD…GGGRSGIIET (182 aa)). NADP(+) contacts are provided by residues 24–27 (YGSQ), K48, S51, T53, and 83–86 (DELQ). The active site involves H108. G134 is an NADP(+) binding site. One can recognise a KARI C-terminal knotted domain in the interval 183 to 328 (NFREECETDL…AKLRGMMPWI (146 aa)). Positions 191, 195, 227, and 231 each coordinate Mg(2+). S252 is a substrate binding site.

This sequence belongs to the ketol-acid reductoisomerase family. Mg(2+) is required as a cofactor.

The catalysed reaction is (2R)-2,3-dihydroxy-3-methylbutanoate + NADP(+) = (2S)-2-acetolactate + NADPH + H(+). It catalyses the reaction (2R,3R)-2,3-dihydroxy-3-methylpentanoate + NADP(+) = (S)-2-ethyl-2-hydroxy-3-oxobutanoate + NADPH + H(+). The protein operates within amino-acid biosynthesis; L-isoleucine biosynthesis; L-isoleucine from 2-oxobutanoate: step 2/4. It participates in amino-acid biosynthesis; L-valine biosynthesis; L-valine from pyruvate: step 2/4. Functionally, involved in the biosynthesis of branched-chain amino acids (BCAA). Catalyzes an alkyl-migration followed by a ketol-acid reduction of (S)-2-acetolactate (S2AL) to yield (R)-2,3-dihydroxy-isovalerate. In the isomerase reaction, S2AL is rearranged via a Mg-dependent methyl migration to produce 3-hydroxy-3-methyl-2-ketobutyrate (HMKB). In the reductase reaction, this 2-ketoacid undergoes a metal-dependent reduction by NADPH to yield (R)-2,3-dihydroxy-isovalerate. In Rhizobium rhizogenes (strain K84 / ATCC BAA-868) (Agrobacterium radiobacter), this protein is Ketol-acid reductoisomerase (NADP(+)).